A 127-amino-acid chain; its full sequence is MFRTMMKAKLHRARVTESNLNYVGSITIDEDIMDAVDIVENEKVQIVNNNNGARFETYVIKGPRGSGVFCLNGAAARLVQEGDVIIVISYALVAEENVKEHQPKVAVLNESNQIVEMLGTEPASTVL.

The Schiff-base intermediate with substrate; via pyruvic acid role is filled by Ser25. Ser25 is subject to Pyruvic acid (Ser). Thr57 is a binding site for substrate. Tyr58 (proton donor) is an active-site residue. 73–75 (GAA) is a binding site for substrate.

Belongs to the PanD family. As to quaternary structure, heterooctamer of four alpha and four beta subunits. Requires pyruvate as cofactor. Is synthesized initially as an inactive proenzyme, which is activated by self-cleavage at a specific serine bond to produce a beta-subunit with a hydroxyl group at its C-terminus and an alpha-subunit with a pyruvoyl group at its N-terminus.

Its subcellular location is the cytoplasm. It catalyses the reaction L-aspartate + H(+) = beta-alanine + CO2. The protein operates within cofactor biosynthesis; (R)-pantothenate biosynthesis; beta-alanine from L-aspartate: step 1/1. Its function is as follows. Catalyzes the pyruvoyl-dependent decarboxylation of aspartate to produce beta-alanine. This Halalkalibacterium halodurans (strain ATCC BAA-125 / DSM 18197 / FERM 7344 / JCM 9153 / C-125) (Bacillus halodurans) protein is Aspartate 1-decarboxylase.